A 331-amino-acid chain; its full sequence is Pseudouridylate synthase TRUB2, mitochondrial (331 aa).

Asp98 (nucleophile) is an active-site residue. Residues 309-331 (STGQPWGLKDPSSTLELESCSGQ) form a disordered region. Polar residues predominate over residues 319-331 (PSSTLELESCSGQ).

Belongs to the pseudouridine synthase TruB family. Forms a regulatory protein-RNA complex, consisting of RCC1L, NGRN, RPUSD3, RPUSD4, TRUB2, FASTKD2 and 16S mt-rRNA.

The protein localises to the mitochondrion matrix. The catalysed reaction is a uridine in mRNA = a pseudouridine in mRNA. It catalyses the reaction uridine(55) in tRNA = pseudouridine(55) in tRNA. In terms of biological role, minor enzyme contributing to the isomerization of uridine to pseudouridine (pseudouridylation) of specific mitochondrial mRNAs (mt-mRNAs) such as COXI and COXIII mt-mRNAs. As a component of a functional protein-RNA module, consisting of RCC1L, NGRN, RPUSD3, RPUSD4, TRUB2, FASTKD2 and 16S mitochondrial ribosomal RNA (16S mt-rRNA), controls 16S mt-rRNA abundance and is required for intra-mitochondrial translation. Also catalyzes pseudouridylation of some tRNAs, including synthesis of pseudouridine(55) from uracil-55, in the psi GC loop of a subset of tRNAs. This Mus musculus (Mouse) protein is Pseudouridylate synthase TRUB2, mitochondrial.